The sequence spans 294 residues: 4-diphosphocytidyl-2-C-methyl-D-erythritol kinase (294 aa).

Residue Lys-16 is part of the active site. An ATP-binding site is contributed by 99-109 (PMGAGLGGGSS). Asp-141 is an active-site residue.

This sequence belongs to the GHMP kinase family. IspE subfamily.

It catalyses the reaction 4-CDP-2-C-methyl-D-erythritol + ATP = 4-CDP-2-C-methyl-D-erythritol 2-phosphate + ADP + H(+). It functions in the pathway isoprenoid biosynthesis; isopentenyl diphosphate biosynthesis via DXP pathway; isopentenyl diphosphate from 1-deoxy-D-xylulose 5-phosphate: step 3/6. Its function is as follows. Catalyzes the phosphorylation of the position 2 hydroxy group of 4-diphosphocytidyl-2C-methyl-D-erythritol. This is 4-diphosphocytidyl-2-C-methyl-D-erythritol kinase from Polynucleobacter asymbioticus (strain DSM 18221 / CIP 109841 / QLW-P1DMWA-1) (Polynucleobacter necessarius subsp. asymbioticus).